The sequence spans 264 residues: Thymidylate synthase (264 aa).

Residue R21 participates in dUMP binding. H51 lines the (6R)-5,10-methylene-5,6,7,8-tetrahydrofolate pocket. A dUMP-binding site is contributed by 126-127 (RR). Residue C146 is the Nucleophile of the active site. DUMP contacts are provided by residues 166-169 (RSCD), N177, and 207-209 (HLY). D169 is a (6R)-5,10-methylene-5,6,7,8-tetrahydrofolate binding site. A263 is a (6R)-5,10-methylene-5,6,7,8-tetrahydrofolate binding site.

It belongs to the thymidylate synthase family. Bacterial-type ThyA subfamily. As to quaternary structure, homodimer.

The protein resides in the cytoplasm. The enzyme catalyses dUMP + (6R)-5,10-methylene-5,6,7,8-tetrahydrofolate = 7,8-dihydrofolate + dTMP. The protein operates within pyrimidine metabolism; dTTP biosynthesis. Catalyzes the reductive methylation of 2'-deoxyuridine-5'-monophosphate (dUMP) to 2'-deoxythymidine-5'-monophosphate (dTMP) while utilizing 5,10-methylenetetrahydrofolate (mTHF) as the methyl donor and reductant in the reaction, yielding dihydrofolate (DHF) as a by-product. This enzymatic reaction provides an intracellular de novo source of dTMP, an essential precursor for DNA biosynthesis. This chain is Thymidylate synthase, found in Aeromonas salmonicida (strain A449).